Reading from the N-terminus, the 99-residue chain is Signal recognition particle 19 kDa protein (99 aa).

This sequence belongs to the SRP19 family. As to quaternary structure, part of the signal recognition particle protein translocation system, which is composed of SRP and FtsY. Archaeal SRP consists of a 7S RNA molecule of 300 nucleotides and two protein subunits: SRP54 and SRP19.

It is found in the cytoplasm. Its function is as follows. Involved in targeting and insertion of nascent membrane proteins into the cytoplasmic membrane. Binds directly to 7S RNA and mediates binding of the 54 kDa subunit of the SRP. This Pyrococcus abyssi (strain GE5 / Orsay) protein is Signal recognition particle 19 kDa protein.